The following is a 1704-amino-acid chain: Phospholipid-transporting ATPase ABCA3 (1704 aa).

An N-linked (GlcNAc...) asparagine glycan is attached at Asn-14. A helical transmembrane segment spans residues 22–42 (VLVTVLELFLPLLFSGILIWL). N-linked (GlcNAc...) asparagine glycosylation is found at Asn-53, Asn-124, Asn-140, and Asn-228. 5 helical membrane passes run 251–271 (ISDP…MLSF), 307–327 (AWFL…TLLF), 344–364 (SLVL…SFMV), 373–393 (MAAT…FFVA), and 405–425 (LLSC…IGKF). Positions 530–763 (IKIKHLSKVF…YGAGYHMTLV (234 aa)) constitute an ABC transporter 1 domain. An ATP-binding site is contributed by 566 to 573 (GHNGAGKT). Residues Asn-620 and Asn-945 are each glycosylated (N-linked (GlcNAc...) asparagine). Helical transmembrane passes span 1100–1120 (IALN…ILAV), 1144–1164 (SALL…LVVF), 1183–1203 (LLLM…SFFF), 1213–1233 (LTIF…IMRI), 1245–1265 (LDHV…SNFY), and 1310–1330 (MAAS…NLLW). N-linked (GlcNAc...) asparagine glycosylation is present at Asn-1350. The ABC transporter 2 domain occupies 1381–1614 (LIINELSKVY…FGSGYSLQAK (234 aa)). Position 1416-1423 (1416-1423 (GFNGAGKT)) interacts with ATP.

Homooligomer; disulfide-linked. Post-translationally, N-glycosylated. Localization at intracellular vesicles is accompanied by processing of oligosaccharide from high mannose type to complex type. N-linked glycosylation at Asn-124 and Asn-140 is required for stability and efficient anterograde trafficking and prevents from proteasomal degradation. Proteolytically cleaved by CTSL and to a lower extent by CTSB within multivesicular bodies (MVB) and lamellar bodies (LB) leading to a mature form of 150 kDa. As to expression, highly expressed in lung, moderately expressed in stomach, intestine, and kidney and weakly expressed in thyroid, brain, liver, spleen, heart, testis, and thymus.

It localises to the endosome. It is found in the multivesicular body membrane. The protein resides in the cytoplasmic vesicle membrane. The protein localises to the late endosome membrane. Its subcellular location is the lysosome membrane. It catalyses the reaction ATP + H2O + xenobioticSide 1 = ADP + phosphate + xenobioticSide 2.. The catalysed reaction is a 1,2-diacyl-sn-glycero-3-phosphocholine(in) + ATP + H2O = a 1,2-diacyl-sn-glycero-3-phosphocholine(out) + ADP + phosphate + H(+). It carries out the reaction ATP + H2O + phospholipidSide 1 = ADP + phosphate + phospholipidSide 2.. The enzyme catalyses 1,2-dihexadecanoyl-sn-glycero-3-phosphocholine(in) + ATP + H2O = 1,2-dihexadecanoyl-sn-glycero-3-phosphocholine(out) + ADP + phosphate + H(+). It catalyses the reaction cholesterol(in) + ATP + H2O = cholesterol(out) + ADP + phosphate + H(+). The catalysed reaction is a 1,2-diacyl-sn-glycero-3-phospho-(1'-sn-glycerol)(in) + ATP + H2O = a 1,2-diacyl-sn-glycero-3-phospho-(1'-sn-glycerol)(out) + ADP + phosphate + H(+). In terms of biological role, catalyzes the ATP-dependent transport of phospholipids such as phosphatidylcholine and phosphoglycerol from the cytoplasm into the lumen side of lamellar bodies, in turn participates in the lamellar bodies biogenesis and homeostasis of pulmonary surfactant. Transports preferentially phosphatidylcholine containing short acyl chains. In addition plays a role as an efflux transporter of miltefosine across macrophage membranes and free cholesterol (FC) through intralumenal vesicles by removing FC from the cell as a component of surfactant and protects cells from free cholesterol toxicity. This is Phospholipid-transporting ATPase ABCA3 from Rattus norvegicus (Rat).